The sequence spans 325 residues: Phospho-N-acetylmuramoyl-pentapeptide-transferase (325 aa).

10 consecutive transmembrane segments (helical) span residues Val-5 to Ile-25, Leu-57 to Phe-77, Val-81 to Ile-101, Leu-117 to Ser-137, Ser-146 to Ala-166, Gly-178 to Thr-198, Tyr-200 to Phe-220, Val-227 to Met-247, Ile-252 to Val-272, and Val-304 to Ile-324.

This sequence belongs to the glycosyltransferase 4 family. MraY subfamily. Mg(2+) is required as a cofactor.

The protein resides in the cell membrane. The catalysed reaction is UDP-N-acetyl-alpha-D-muramoyl-L-alanyl-gamma-D-glutamyl-meso-2,6-diaminopimeloyl-D-alanyl-D-alanine + di-trans,octa-cis-undecaprenyl phosphate = di-trans,octa-cis-undecaprenyl diphospho-N-acetyl-alpha-D-muramoyl-L-alanyl-D-glutamyl-meso-2,6-diaminopimeloyl-D-alanyl-D-alanine + UMP. It functions in the pathway cell wall biogenesis; peptidoglycan biosynthesis. Its function is as follows. Catalyzes the initial step of the lipid cycle reactions in the biosynthesis of the cell wall peptidoglycan: transfers peptidoglycan precursor phospho-MurNAc-pentapeptide from UDP-MurNAc-pentapeptide onto the lipid carrier undecaprenyl phosphate, yielding undecaprenyl-pyrophosphoryl-MurNAc-pentapeptide, known as lipid I. The protein is Phospho-N-acetylmuramoyl-pentapeptide-transferase of Halalkalibacterium halodurans (strain ATCC BAA-125 / DSM 18197 / FERM 7344 / JCM 9153 / C-125) (Bacillus halodurans).